Here is a 136-residue protein sequence, read N- to C-terminus: Ergosterol biosynthetic protein 28 (136 aa).

4 helical membrane-spanning segments follow: residues 18 to 34 (VVVS…SFLT), 56 to 72 (FGIW…YCAY), 79 to 95 (VYFL…FHFL), and 109 to 125 (GLLS…WFMA).

Belongs to the ERG28 family. As to quaternary structure, heterotetramer of erg25, erg26, erg27 and erg28. Erg28 acts as a scaffold to tether erg27 and other 4,4-demethylation-related enzymes, forming a demethylation enzyme complex, in the endoplasmic reticulum.

It localises to the endoplasmic reticulum membrane. It functions in the pathway steroid metabolism; ergosterol biosynthesis. Part of the third module of ergosterol biosynthesis pathway that includes by the late steps of the pathway. Erg28 has a role as a scaffold to help anchor the catalytic components of the C-4 demethylation complex erg25, erg26 and erg27 to the endoplasmic reticulum. The third module or late pathway involves the ergosterol synthesis itself through consecutive reactions that mainly occur in the endoplasmic reticulum (ER) membrane. Firstly, the squalene synthase erg9 catalyzes the condensation of 2 farnesyl pyrophosphate moieties to form squalene, which is the precursor of all steroids. Secondly, squalene is converted into lanosterol by the consecutive action of the squalene epoxidase erg1 and the lanosterol synthase erg7. The lanosterol 14-alpha-demethylase erg11/cyp1 catalyzes C14-demethylation of lanosterol to produce 4,4'-dimethyl cholesta-8,14,24-triene-3-beta-ol. In the next steps, a complex process involving various demethylation, reduction and desaturation reactions catalyzed by the C-14 reductase erg24 and the C-4 demethylation complex erg25-erg26-erg27 leads to the production of zymosterol. Erg28 likely functions in the C-4 demethylation complex reaction by tethering erg26 and Erg27 to the endoplasmic reticulum or to facilitate interaction between these proteins. Then, the sterol 24-C-methyltransferase erg6 catalyzes the methyl transfer from S-adenosyl-methionine to the C-24 of zymosterol to form fecosterol. The C-8 sterol isomerase erg2 catalyzes the reaction which results in unsaturation at C-7 in the B ring of sterols and thus converts fecosterol to episterol. The sterol-C5-desaturases erg31 and erg32 then catalyze the introduction of a C-5 double bond in the B ring to produce 5-dehydroepisterol. The C-22 sterol desaturase erg5 further converts 5-dehydroepisterol into ergosta-5,7,22,24(28)-tetraen-3beta-ol by forming the C-22(23) double bond in the sterol side chain. Finally, ergosta-5,7,22,24(28)-tetraen-3beta-ol is substrate of the C-24(28) sterol reductase erg4 to produce ergosterol. In the genus Schizosaccharomyces, a second route exists between lanosterol and fecosterol, via the methylation of lanosterol to eburicol by erg6, followed by C14-demethylation by erg11/cyp1 and C4-demethylation by the demethylation complex erg25-erg26-erg27. Its function is as follows. Extends the chronological lifespan when overexpressed. The sequence is that of Ergosterol biosynthetic protein 28 from Schizosaccharomyces pombe (strain 972 / ATCC 24843) (Fission yeast).